Consider the following 713-residue polypeptide: Mitochondrial intermediate peptidase (713 aa).

Residues 1-35 (MLCVGRLGGLGARAAALPPRRAGRGSLEAGIRARR) constitute a mitochondrion transit peptide. K126 bears the N6-acetyllysine mark. H495 contributes to the Zn(2+) binding site. The active site involves E496. Zn(2+) contacts are provided by H499 and H502.

Belongs to the peptidase M3 family. Monomer. Zn(2+) is required as a cofactor.

The protein localises to the mitochondrion matrix. It catalyses the reaction Release of an N-terminal octapeptide as second stage of processing of some proteins imported into the mitochondrion.. With respect to regulation, activity is divalent cation-dependent. It is stimulated by manganese, magnesium or calcium ions and reversibly inhibited by zinc, cobalt and iron. In terms of biological role, cleaves proteins, imported into the mitochondrion, to their mature size. This chain is Mitochondrial intermediate peptidase (MIPEP), found in Homo sapiens (Human).